A 1804-amino-acid polypeptide reads, in one-letter code: MEPWSRWKTKRWIWDLTISTLVLTFLFQAREVRGAAPVDILKALDFHNSPVGISKTTGFCTSRKNSKDPDIAYRVTEEAQISAPTKQLFPGGIFPQDFSILFTIKPKKGTQAFLLSLYNEHGIQQLGVEVGRSPVFLFEDHTGKPTPENYPLFSTVNIADGKWHRVAISVEKKTVTMIVDCKKKITKPLDRSERSIVDTNGIMVFGTRILETDVFQGDIQQFLITGDPKAAYDYCDHYSPDCDLTSKAAQAQEPHIDEYAPEDIIEYDYEYGETDYKEAESVTEMPTVTEETVAQTEANIVDDFQDYNYGTMETYQTESPRRVSGSNEPNPVEEGFTEEYLTGEDYDVQRNISEDILYGNKGIDGRDSDLLVDGDLGEYDFYEYKEYEERTTTSPNEEFGPGVPAETDFTETSINGHGAYGEKGQKGEPAVVEPGMLVEGPPGPAGPAGLMGPPGLQGPSGLPGDPGDRGPPGRPGLPGADGLPGPPGTMLMLPFRYGGDGSKGPTISAQEAQAQAILQQARIALRGPPGPMGLTGRPGPVGGPGSAGAKGESGDPGPQGPRGVQGPPGPTGKPGKRGRPGADGGRGMPGEPGSKGDRGFDGLPGLPGDKGHRGERGPQGPPGLPGDDGMRGEDGEIGPRGLPGEAGPRGLLGPRGTPGPPGQPGIGGIDGPQGPKGNMGPQGEPGPPGQQGNPGPQGLPGPQGPIGPPGEKGPQGKPGLAGLPGADGPPGHPGKEGQSGEKGALGPPGPQGPIGYPGPRGVKGADGVRGLKGSKGEKGEDGFPGFKGDMGLKGDRGEVGQVGPRGEDGPEGPKGRAGPTGDPGPSGQAGEKGKLGVPGLPGYPGRQGPKGSTGFPGFPGANGEKGARGIAGKPGPRGQRGPTGPRGSRGARGPTGKPGPKGTSGGDGPPGPPGERGPQGPQGPVGFPGPKGPPGPAGKDGLPGHPGQRGETGFQGKTGPPGPGGVVGPQGPTGETGPIGERGHPGTPGPPGEQGLPGAAGKEGAKGDPGPQGISGKDGPAGIRGFPGERGLPGAQGAPGLKGGEGPQGPQGPIGSPGERGSAGTAGPIGLPGRPGPQGPPGPAGEKGAPGEKGPQGPAGRDGVQGPVGLPGPAGPAGSPGEDGDKGEIGEPGQKGSKGDKGENGPPGPPGLQGPVGAPGIAGGDGEAGPRGQQGMFGQKGDEGARGFPGPPGPIGLQGLPGPPGEKGENGDVGPMGPPGPPGPRGPQGPNGADGPQGPPGSIGSVGGVGEKGEPGEAGNPGPPGEAGSGGPKGERGEKGEAGPPGAAGPPGIKGPPGDDGPKGNPGPVGFPGDPGPPGEPGPAGQDGVGGDKGEDGDPGQPGPPGPSGEAGPPGPPGKRGPPGASGSEGRQGEKGAKGEAGAEGPPGKTGPVGPQGPSGKPGPEGLRGIPGPVGEQGLPGAAGQDGPPGPLGPPGLPGLKGDPGSKGEKGHPGLIGLIGPPGEQGEKGDRGLPGTQGSPGAKGDGGIPGPAGPIGPPGPPGLPGPAGPKGNKGSSGPTGQKGDSGMPGPPGPPGPPGEVIQPLPILSPKKTRRHTESIQADAGDNILDYSDGMEEIFGSLNSLKQDIEHMKFPMGTQTNPARTCKDLQLSHPDFPDGEYWIDPNQGCSGDSFKVYCNFTAGGETCIYPDKKSEGVRLSSWPKEKPGSWYSEFKRGKLLSYLDVEGNSINMVQMTFLKLLTASARQNFTYNCHQSTAWYDVLSGSYDKALRFLGSNDEEMSYENNPHIKALYDGCASRKGYEKTVIEINTPKIDQVPIIDVMINDFGDQNQKFGFEVGPACFLG.

Residues 1–34 form the signal peptide; sequence MEPWSRWKTKRWIWDLTISTLVLTFLFQAREVRG. Positions 35 to 511 are cleaved as a propeptide — N-terminal propeptide; the sequence is AAPVDILKAL…SKGPTISAQE (477 aa). 2 cysteine pairs are disulfide-bonded: Cys60–Cys242 and Cys181–Cys235. In terms of domain architecture, Laminin G-like spans 70 to 242; that stretch reads DIAYRVTEEA…DYCDHYSPDC (173 aa). Residues 229–417 are nonhelical region; the sequence is KAAYDYCDHY…DFTETSINGH (189 aa). An N-linked (GlcNAc...) asparagine glycan is attached at Asn351. Positions 418 to 506 are triple-helical region (interrupted); the sequence is GAYGEKGQKG…YGGDGSKGPT (89 aa). The tract at residues 437–506 is disordered; that stretch reads LVEGPPGPAG…YGGDGSKGPT (70 aa). Residues 440-488 form the Collagen-like 1 domain; the sequence is GPPGPAGPAGLMGPPGLQGPSGLPGDPGDRGPPGRPGLPGADGLPGPPG. Low complexity-rich tracts occupy residues 447–465 and 477–494; these read PAGL…LPGD and LPGA…LMLP. The short nonhelical segment stretch occupies residues 507–509; sequence ISA. Residues 510-527 are telopeptide; that stretch reads QEAQAQAILQQARIALRG. The disordered stretch occupies residues 526–1560; that stretch reads RGPPGPMGLT…KTRRHTESIQ (1035 aa). The interval 528 to 1540 is triple-helical region; that stretch reads PPGPMGLTGR…PGPPGPPGEV (1013 aa). Collagen-like domains lie at 530 to 584, 581 to 639, 607 to 664, and 641 to 698; these read GPMG…GADG, GADG…EIGP, PGDK…PGQP, and GLPG…GPQG. 2 stretches are compositionally biased toward gly residues: residues 539–548 and 581–590; these read GPVGGPGSAG and GADGGRGMPG. Position 610 is an allysine (Lys610). Positions 639 to 655 are enriched in low complexity; sequence PRGLPGEAGPRGLLGPR. Residues 697 to 708 are compositionally biased toward pro residues; sequence QGLPGPQGPIGP. Residues 715–726 are compositionally biased toward low complexity; that stretch reads QGKPGLAGLPGA. The 59-residue stretch at 746–804 folds into the Collagen-like 6 domain; it reads GPPGPQGPIGYPGPRGVKGADGVRGLKGSKGEKGEDGFPGFKGDMGLKGDRGEVGQVGP. Positions 805 to 814 are enriched in basic and acidic residues; sequence RGEDGPEGPK. Low complexity-rich tracts occupy residues 873–901, 916–925, and 969–979; these read KPGP…PGPK, RGPQGPQGPV, and PQGPTGETGPI. Residues 1040–1049 are compositionally biased toward gly residues; the sequence is GLKGGEGPQG. A compositionally biased stretch (pro residues) spans 1074 to 1083; it reads RPGPQGPPGP. The span at 1084–1108 shows a compositional bias: low complexity; sequence AGEKGAPGEKGPQGPAGRDGVQGPV. A compositionally biased stretch (gly residues) spans 1160-1169; that stretch reads GIAGGDGEAG. Composition is skewed to pro residues over residues 1216 to 1227 and 1341 to 1360; these read MGPPGPPGPRGP and QPGP…PGKR. 2 stretches are compositionally biased toward low complexity: residues 1383–1392 and 1417–1426; these read AEGPPGKTGP and QGLPGAAGQD. Collagen-like domains are found at residues 1391–1449, 1442–1492, and 1481–1539; these read GPVG…SKGE, GDPG…PGPA, and GAKG…PPGE. A compositionally biased stretch (pro residues) spans 1428 to 1437; sequence PPGPLGPPGL. An Allysine modification is found at Lys1450. Over residues 1453 to 1462 the composition is skewed to low complexity; it reads PGLIGLIGPP. The segment covering 1481 to 1490 has biased composition (gly residues); it reads GAKGDGGIPG. Residues 1491–1507 show a composition bias toward pro residues; it reads PAGPIGPPGPPGLPGPA. A compositionally biased stretch (low complexity) spans 1509–1519; the sequence is PKGNKGSSGPT. Positions 1528–1537 are enriched in pro residues; the sequence is PGPPGPPGPP. Residues 1541 to 1561 form a nonhelical region (C-terminal) region; it reads IQPLPILSPKKTRRHTESIQA. Positions 1562 to 1804 are cleaved as a propeptide — C-terminal propeptide; that stretch reads DAGDNILDYS…FEVGPACFLG (243 aa). The region spanning 1575–1803 is the Fibrillar collagen NC1 domain; the sequence is EEIFGSLNSL…GFEVGPACFL (229 aa). A disulfide bond links Cys1605 and Cys1637. Positions 1623, 1625, 1626, 1628, and 1631 each coordinate Ca(2+). 2 N-linked (GlcNAc...) asparagine glycosylation sites follow: Asn1638 and Asn1707. 2 cysteine pairs are disulfide-bonded: Cys1646–Cys1801 and Cys1712–Cys1755.

This sequence belongs to the fibrillar collagen family. Trimers composed of three different chains: alpha 1(XI), alpha 2(XI), and alpha 3(XI). Alpha 3(XI) is probably a post-translational modification of alpha 1(II). Post-translationally, prolines at the third position of the tripeptide repeating unit (G-X-Y) are hydroxylated in some or all of the chains. N-glycosylated.

The protein localises to the secreted. Its subcellular location is the extracellular space. It localises to the extracellular matrix. Functionally, may play an important role in fibrillogenesis by controlling lateral growth of collagen II fibrils. The protein is Collagen alpha-1(XI) chain (Col11a1) of Rattus norvegicus (Rat).